A 359-amino-acid chain; its full sequence is Serine hydrolase-like protein DDB_G0286239 (359 aa).

One can recognise an AB hydrolase-1 domain in the interval 38-289; it reads LALHGWLDNA…VPGSHHFHME (252 aa). The active site involves serine 111. The segment at 310 to 359 is disordered; that stretch reads FTPSSTTQQQQQQQQSAENKKGDNHNQIAEQDLSTSNTSSPIISKPKPNL. Residues 334–351 show a composition bias toward polar residues; that stretch reads HNQIAEQDLSTSNTSSPI.

This sequence belongs to the AB hydrolase superfamily.

Its function is as follows. Probable serine hydrolase. The sequence is that of Serine hydrolase-like protein DDB_G0286239 from Dictyostelium discoideum (Social amoeba).